A 308-amino-acid chain; its full sequence is Oxygen-dependent coproporphyrinogen-III oxidase (308 aa).

S100 contributes to the substrate binding site. Residues H104 and H114 each coordinate a divalent metal cation. Residue H114 is the Proton donor of the active site. 116-118 (NFR) is a substrate binding site. Residues H153 and H183 each coordinate a divalent metal cation. Positions 248 to 283 (YVEFNLVFDRGTIFGLQSGGRTESILSSMPPMATWK) are important for dimerization. A substrate-binding site is contributed by 266–268 (GGR).

Belongs to the aerobic coproporphyrinogen-III oxidase family. Homodimer. A divalent metal cation is required as a cofactor.

It localises to the cytoplasm. It catalyses the reaction coproporphyrinogen III + O2 + 2 H(+) = protoporphyrinogen IX + 2 CO2 + 2 H2O. The protein operates within porphyrin-containing compound metabolism; protoporphyrin-IX biosynthesis; protoporphyrinogen-IX from coproporphyrinogen-III (O2 route): step 1/1. Involved in the heme biosynthesis. Catalyzes the aerobic oxidative decarboxylation of propionate groups of rings A and B of coproporphyrinogen-III to yield the vinyl groups in protoporphyrinogen-IX. The chain is Oxygen-dependent coproporphyrinogen-III oxidase from Francisella philomiragia subsp. philomiragia (strain ATCC 25017 / CCUG 19701 / FSC 153 / O#319-036).